The primary structure comprises 404 residues: LL-diaminopimelate aminotransferase (404 aa).

Substrate is bound by residues Tyr-15 and Gly-42. Pyridoxal 5'-phosphate is bound by residues Tyr-72, 108-109 (AK), Tyr-132, Asn-188, Tyr-219, and 247-249 (SFS). Residues Lys-109, Tyr-132, and Asn-188 each coordinate substrate. Residue Lys-250 is modified to N6-(pyridoxal phosphate)lysine. 2 residues coordinate pyridoxal 5'-phosphate: Arg-258 and Asn-288. Asn-288 and Arg-384 together coordinate substrate.

Belongs to the class-I pyridoxal-phosphate-dependent aminotransferase family. LL-diaminopimelate aminotransferase subfamily. Homodimer. Pyridoxal 5'-phosphate serves as cofactor.

The catalysed reaction is (2S,6S)-2,6-diaminopimelate + 2-oxoglutarate = (S)-2,3,4,5-tetrahydrodipicolinate + L-glutamate + H2O + H(+). Its pathway is amino-acid biosynthesis; L-lysine biosynthesis via DAP pathway; LL-2,6-diaminopimelate from (S)-tetrahydrodipicolinate (aminotransferase route): step 1/1. In terms of biological role, involved in the synthesis of meso-diaminopimelate (m-DAP or DL-DAP), required for both lysine and peptidoglycan biosynthesis. Catalyzes the direct conversion of tetrahydrodipicolinate to LL-diaminopimelate. The sequence is that of LL-diaminopimelate aminotransferase from Lachnoclostridium phytofermentans (strain ATCC 700394 / DSM 18823 / ISDg) (Clostridium phytofermentans).